The sequence spans 163 residues: Transcription elongation factor GreA (163 aa).

The stretch at 11–38 (FKQLEKELDRLKKERPGVIQAIKEAREE) forms a coiled coil.

Belongs to the GreA/GreB family.

Its function is as follows. Necessary for efficient RNA polymerase transcription elongation past template-encoded arresting sites. The arresting sites in DNA have the property of trapping a certain fraction of elongating RNA polymerases that pass through, resulting in locked ternary complexes. Cleavage of the nascent transcript by cleavage factors such as GreA or GreB allows the resumption of elongation from the new 3'terminus. GreA releases sequences of 2 to 3 nucleotides. The chain is Transcription elongation factor GreA from Nitratidesulfovibrio vulgaris (strain ATCC 29579 / DSM 644 / CCUG 34227 / NCIMB 8303 / VKM B-1760 / Hildenborough) (Desulfovibrio vulgaris).